A 348-amino-acid chain; its full sequence is uncharacterized protein (348 aa).

An N-terminal signal peptide occupies residues Met1–Lys26.

This is an uncharacterized protein from Bacillus subtilis (strain 168).